We begin with the raw amino-acid sequence, 230 residues long: Small ribosomal subunit protein uS7B (230 aa).

Residues 1–22 (MSEEVVESSSQEASQVIPQEQE) form a disordered region. Residues 7–16 (ESSSQEASQV) show a composition bias toward low complexity.

The protein belongs to the universal ribosomal protein uS7 family.

The protein is Small ribosomal subunit protein uS7B (RpS5b) of Drosophila melanogaster (Fruit fly).